An 823-amino-acid polypeptide reads, in one-letter code: Zygotic DNA replication licensing factor mcm6 (823 aa).

The C4-type zinc-finger motif lies at 159-186 (CLDCQTLVRDVEQQFKYTQPSICRNPVC). One can recognise an MCM domain in the interval 347–554 (LYHNLCTSLF…TDYAIARRIV (208 aa)). An ATP-binding site is contributed by 397–404 (GDPSTAKS). Positions 529 to 532 (SRFD) match the Arginine finger motif. A disordered region spans residues 666–713 (NLDQEDEHEAEEEPQEVINGDASVPSGVNGHVNGMNGHAEEPNAATPK). Acidic residues predominate over residues 667–680 (LDQEDEHEAEEEPQ). Positions 692 to 702 (GVNGHVNGMNG) are enriched in low complexity.

It belongs to the MCM family. Component of the mcm2-7 complex (RLF-M). The complex forms a toroidal hexameric ring with the proposed subunit order mcm2-mcm6-mcm4-mcm7-mcm3-mcm5. Begins to associate with zmcm3, mcm4 and mcm7 into mcm complexes at the neurula stage.

The protein localises to the nucleus. The catalysed reaction is ATP + H2O = ADP + phosphate + H(+). Functionally, acts as a component of the mcm2-7 complex (mcm complex) which is the putative replicative helicase essential for 'once per cell cycle' DNA replication initiation and elongation in eukaryotic cells. The active ATPase sites in the mcm2-7 ring are formed through the interaction surfaces of two neighboring subunits such that a critical structure of a conserved arginine finger motif is provided in trans relative to the ATP-binding site of the Walker A box of the adjacent subunit. The six ATPase active sites, however, are likely to contribute differentially to the complex helicase activity. The existence of maternal and zygotic forms of mcm3 and mcm6 suggests that specific forms of mcm2-7 complexes may be used during different stages of development. May replace mmcm6 in the mcm2-7 complex. The polypeptide is Zygotic DNA replication licensing factor mcm6 (Xenopus tropicalis (Western clawed frog)).